The sequence spans 386 residues: Succinate--CoA ligase [ADP-forming] subunit beta (386 aa).

The ATP-grasp domain maps to 9 to 244; that stretch reads KDLLTAYQLP…PSQENIRDVL (236 aa). Residues K46, 53-55, V102, and E107 contribute to the ATP site; that span reads GRG. Mg(2+) is bound by residues N199 and D213. Substrate is bound by residues N264 and 321 to 323; that span reads GIM.

This sequence belongs to the succinate/malate CoA ligase beta subunit family. As to quaternary structure, heterotetramer of two alpha and two beta subunits. It depends on Mg(2+) as a cofactor.

The enzyme catalyses succinate + ATP + CoA = succinyl-CoA + ADP + phosphate. It catalyses the reaction GTP + succinate + CoA = succinyl-CoA + GDP + phosphate. Its pathway is carbohydrate metabolism; tricarboxylic acid cycle; succinate from succinyl-CoA (ligase route): step 1/1. Its function is as follows. Succinyl-CoA synthetase functions in the citric acid cycle (TCA), coupling the hydrolysis of succinyl-CoA to the synthesis of either ATP or GTP and thus represents the only step of substrate-level phosphorylation in the TCA. The beta subunit provides nucleotide specificity of the enzyme and binds the substrate succinate, while the binding sites for coenzyme A and phosphate are found in the alpha subunit. This is Succinate--CoA ligase [ADP-forming] subunit beta from Chlamydia trachomatis serovar L2 (strain ATCC VR-902B / DSM 19102 / 434/Bu).